We begin with the raw amino-acid sequence, 483 residues long: tRNA-2-methylthio-N(6)-dimethylallyladenosine synthase (483 aa).

An MTTase N-terminal domain is found at 31–148 (KKLYIETQGC…LPQMLDQHHA (118 aa)). [4Fe-4S] cluster-binding residues include cysteine 40, cysteine 77, cysteine 111, cysteine 192, cysteine 196, and cysteine 199. Residues 178–410 (RVEGFKAFVS…QQVIKQSSIE (233 aa)) enclose the Radical SAM core domain. Residues 413–477 (DAMLGKIERV…LNLVYGELLN (65 aa)) form the TRAM domain.

This sequence belongs to the methylthiotransferase family. MiaB subfamily. In terms of assembly, monomer. [4Fe-4S] cluster serves as cofactor.

The protein localises to the cytoplasm. It catalyses the reaction N(6)-dimethylallyladenosine(37) in tRNA + (sulfur carrier)-SH + AH2 + 2 S-adenosyl-L-methionine = 2-methylsulfanyl-N(6)-dimethylallyladenosine(37) in tRNA + (sulfur carrier)-H + 5'-deoxyadenosine + L-methionine + A + S-adenosyl-L-homocysteine + 2 H(+). Its function is as follows. Catalyzes the methylthiolation of N6-(dimethylallyl)adenosine (i(6)A), leading to the formation of 2-methylthio-N6-(dimethylallyl)adenosine (ms(2)i(6)A) at position 37 in tRNAs that read codons beginning with uridine. The protein is tRNA-2-methylthio-N(6)-dimethylallyladenosine synthase of Acinetobacter baumannii (strain AB0057).